The primary structure comprises 275 residues: Uroplakin-3b (275 aa).

An N-terminal signal peptide occupies residues 1-26 (MVRTRWQPPLRALLLLVLVWLPQSLS). The Lumenal segment spans residues 27–196 (LDLIAYVPQI…DTWPGRRSGC (170 aa)). Asn-77 carries N-linked (GlcNAc...) asparagine glycosylation. The helical transmembrane segment at 197–217 (MIVITSILSALAGLLLLAFLA) threads the bilayer. Over 218–275 (ASTTRFSSLWWPEEAPEQLRIGSFMGKRYMTHHIPPSEAATLPVGCEPGLDPLPSLSP) the chain is Cytoplasmic.

It belongs to the uroplakin-3 family. Heterodimer with uroplakin-1B (UPK1B). As to expression, expression is urothelium-specific.

Its subcellular location is the cell membrane. In terms of biological role, component of the asymmetric unit membrane (AUM); a highly specialized biomembrane elaborated by terminally differentiated urothelial cells. May play an important role in AUM-cytoskeleton interaction in terminally differentiated urothelial cells. It also contributes to the formation of urothelial glycocalyx which may play an important role in preventing bacterial adherence. The chain is Uroplakin-3b (Upk3b) from Mus musculus (Mouse).